Consider the following 116-residue polypeptide: Small ribosomal subunit protein eS24 (116 aa).

The disordered stretch occupies residues 81-116 (IEPEHMVERHKKVLEELESESEESEESESEESEEEE). The span at 96-116 (ELESESEESEESESEESEEEE) shows a compositional bias: acidic residues.

It belongs to the eukaryotic ribosomal protein eS24 family.

In Methanopyrus kandleri (strain AV19 / DSM 6324 / JCM 9639 / NBRC 100938), this protein is Small ribosomal subunit protein eS24.